A 281-amino-acid chain; its full sequence is 33 kDa chaperonin (281 aa).

2 disulfides stabilise this stretch: cysteine 229–cysteine 231 and cysteine 262–cysteine 265.

Belongs to the HSP33 family. In terms of processing, under oxidizing conditions two disulfide bonds are formed involving the reactive cysteines. Under reducing conditions zinc is bound to the reactive cysteines and the protein is inactive.

Its subcellular location is the cytoplasm. In terms of biological role, redox regulated molecular chaperone. Protects both thermally unfolding and oxidatively damaged proteins from irreversible aggregation. Plays an important role in the bacterial defense system toward oxidative stress. This is 33 kDa chaperonin from Pseudoalteromonas translucida (strain TAC 125).